A 486-amino-acid polypeptide reads, in one-letter code: Pup--protein ligase (486 aa).

Residue Glu33 participates in Mg(2+) binding. Arg76 is an ATP binding site. Tyr78 lines the Mg(2+) pocket. Catalysis depends on Asp80, which acts as the Proton acceptor. A Mg(2+)-binding site is contributed by Glu86. Positions 89 and 451 each coordinate ATP.

It belongs to the Pup ligase/Pup deamidase family. Pup-conjugating enzyme subfamily.

The catalysed reaction is ATP + [prokaryotic ubiquitin-like protein]-L-glutamate + [protein]-L-lysine = ADP + phosphate + N(6)-([prokaryotic ubiquitin-like protein]-gamma-L-glutamyl)-[protein]-L-lysine.. It functions in the pathway protein degradation; proteasomal Pup-dependent pathway. The protein operates within protein modification; protein pupylation. Functionally, catalyzes the covalent attachment of the prokaryotic ubiquitin-like protein modifier Pup to the proteasomal substrate proteins, thereby targeting them for proteasomal degradation. This tagging system is termed pupylation. The ligation reaction involves the side-chain carboxylate of the C-terminal glutamate of Pup and the side-chain amino group of a substrate lysine. The chain is Pup--protein ligase from Bifidobacterium longum (strain NCC 2705).